The chain runs to 369 residues: MSVNVDATSSSGASEVRHDWTLAEVNALFAMPFNDLLFKAQCVHRAHFDPNYVQVSTLLSIKTGACPEDCKYCPQSARYDTGLEKERLMEIEKVIQRAREAKAAGSTRFCMGAAWRNPKERDMPYVTDMVREVKKLGLETCMTLGMLTREQAIALQQAGLDYYNHNLDTSPEFYGDIITTRTYQDRLNTLDAVREAGMNVCSGGIVGMGETGSDRSGLLMQLANLEHQPESVPINMLVKVKGTPMENVEDLDYFEFIRTIAVARIMMPKSFVRLSAGREAMNEQMQAMCFMAGANSIFYGCKLLTTSNPETHEDVMLFKKLGINAKQTREYSDEAHQAALLDEIQTNEAPQAPEMFYDATQKKPETVNI.

The Radical SAM core domain maps to Asn51 to Lys269. Cys66, Cys70, and Cys73 together coordinate [4Fe-4S] cluster. [2Fe-2S] cluster-binding residues include Cys110, Cys141, Cys201, and Arg273.

It belongs to the radical SAM superfamily. Biotin synthase family. Homodimer. The cofactor is [4Fe-4S] cluster. [2Fe-2S] cluster is required as a cofactor.

The enzyme catalyses (4R,5S)-dethiobiotin + (sulfur carrier)-SH + 2 reduced [2Fe-2S]-[ferredoxin] + 2 S-adenosyl-L-methionine = (sulfur carrier)-H + biotin + 2 5'-deoxyadenosine + 2 L-methionine + 2 oxidized [2Fe-2S]-[ferredoxin]. Its pathway is cofactor biosynthesis; biotin biosynthesis; biotin from 7,8-diaminononanoate: step 2/2. Catalyzes the conversion of dethiobiotin (DTB) to biotin by the insertion of a sulfur atom into dethiobiotin via a radical-based mechanism. This Pseudoalteromonas atlantica (strain T6c / ATCC BAA-1087) protein is Biotin synthase.